The primary structure comprises 391 residues: 3-ketoacyl-CoA thiolase (391 aa).

The active-site Acyl-thioester intermediate is the Cys95. Residues His347 and Cys377 each act as proton acceptor in the active site.

The protein belongs to the thiolase-like superfamily. Thiolase family. Heterotetramer of two alpha chains (FadB) and two beta chains (FadA).

It localises to the cytoplasm. The catalysed reaction is an acyl-CoA + acetyl-CoA = a 3-oxoacyl-CoA + CoA. It functions in the pathway lipid metabolism; fatty acid beta-oxidation. Catalyzes the final step of fatty acid oxidation in which acetyl-CoA is released and the CoA ester of a fatty acid two carbons shorter is formed. This is 3-ketoacyl-CoA thiolase from Ectopseudomonas oleovorans (Pseudomonas oleovorans).